We begin with the raw amino-acid sequence, 671 residues long: Probable potassium transport system protein Kup (671 aa).

The segment at 1–43 is disordered; it reads MSQIPSPNDPASTGAAPSSAAVPAGPSATPAPSPTAGFSLPGH. Residues 10–37 are compositionally biased toward low complexity; it reads PASTGAAPSSAAVPAGPSATPAPSPTAG. Helical transmembrane passes span 52–72, 92–112, 147–167, 181–201, 209–229, 255–275, 291–311, 323–343, 381–401, 407–427, 441–461, and 465–485; these read LAAL…TSPL, VLGV…FKYM, LMLG…TPAI, PAME…LFLF, VGAV…VLGV, GWHG…GEAL, WLGL…ALLL, LLAP…AAIV, IYLP…VLGF, LASA…LLFH, AWPL…ANVV, and DGGW…STWK.

This sequence belongs to the HAK/KUP transporter (TC 2.A.72) family.

The protein resides in the cell inner membrane. The catalysed reaction is K(+)(in) + H(+)(in) = K(+)(out) + H(+)(out). Functionally, transport of potassium into the cell. Likely operates as a K(+):H(+) symporter. This chain is Probable potassium transport system protein Kup, found in Anaeromyxobacter dehalogenans (strain 2CP-1 / ATCC BAA-258).